The primary structure comprises 148 residues: Isotocin-neurophysin IT 2 (148 aa).

The first 20 residues, 1 to 20, serve as a signal peptide directing secretion; that stretch reads MSGSMSSVFSLLYLLSVCSA. Residues Cys-21 and Cys-26 are joined by a disulfide bond. Gly-29 carries the post-translational modification Glycine amide. Disulfide bonds link Cys-42–Cys-86, Cys-45–Cys-59, Cys-53–Cys-76, Cys-60–Cys-66, Cys-93–Cys-105, Cys-99–Cys-117, and Cys-106–Cys-111.

The protein belongs to the vasopressin/oxytocin family.

Its function is as follows. Isotocin causes contraction of smooth muscles. The polypeptide is Isotocin-neurophysin IT 2 (Catostomus commersonii (White sucker)).